Here is a 217-residue protein sequence, read N- to C-terminus: Protein GrpE (217 aa).

Over residues 1 to 10 the composition is skewed to basic and acidic residues; that stretch reads MSDHAEHAAD. The segment at 1–39 is disordered; that stretch reads MSDHAEHAADAADTDAPEGDDAGGDDGEQAGDDGTSALS. The span at 12-31 shows a compositional bias: acidic residues; that stretch reads ADTDAPEGDDAGGDDGEQAG.

Belongs to the GrpE family. As to quaternary structure, homodimer.

It localises to the cytoplasm. Its function is as follows. Participates actively in the response to hyperosmotic and heat shock by preventing the aggregation of stress-denatured proteins, in association with DnaK and GrpE. It is the nucleotide exchange factor for DnaK and may function as a thermosensor. Unfolded proteins bind initially to DnaJ; upon interaction with the DnaJ-bound protein, DnaK hydrolyzes its bound ATP, resulting in the formation of a stable complex. GrpE releases ADP from DnaK; ATP binding to DnaK triggers the release of the substrate protein, thus completing the reaction cycle. Several rounds of ATP-dependent interactions between DnaJ, DnaK and GrpE are required for fully efficient folding. This is Protein GrpE from Halobacterium salinarum (strain ATCC 29341 / DSM 671 / R1).